Consider the following 470-residue polypeptide: Glutamyl-tRNA reductase (470 aa).

Substrate contacts are provided by residues 49-52, serine 109, 114-116, and glutamine 120; these read TCNR and ESQ. Cysteine 50 acts as the Nucleophile in catalysis. An NADP(+)-binding site is contributed by 223–228; it reads GAGAVG.

It belongs to the glutamyl-tRNA reductase family. Homodimer.

It catalyses the reaction (S)-4-amino-5-oxopentanoate + tRNA(Glu) + NADP(+) = L-glutamyl-tRNA(Glu) + NADPH + H(+). It participates in porphyrin-containing compound metabolism; protoporphyrin-IX biosynthesis; 5-aminolevulinate from L-glutamyl-tRNA(Glu): step 1/2. Functionally, catalyzes the NADPH-dependent reduction of glutamyl-tRNA(Glu) to glutamate 1-semialdehyde (GSA). In Frankia alni (strain DSM 45986 / CECT 9034 / ACN14a), this protein is Glutamyl-tRNA reductase.